Consider the following 102-residue polypeptide: MKNQKIRIRLKAFDHQMLDQSATKIVDTAKRTGAQVAGPVPLPTEKSIYTILRSPHVNKDSREQFEMRVHKRLIDILEPTPKTVDALMRLDLPAGVDIEIKL.

Belongs to the universal ribosomal protein uS10 family. As to quaternary structure, part of the 30S ribosomal subunit.

Functionally, involved in the binding of tRNA to the ribosomes. The sequence is that of Small ribosomal subunit protein uS10 from Desulforamulus reducens (strain ATCC BAA-1160 / DSM 100696 / MI-1) (Desulfotomaculum reducens).